The sequence spans 509 residues: Probable xyloglucan galactosyltransferase GT12 (509 aa).

Residues 1–3 (MMK) lie on the Cytoplasmic side of the membrane. Residues 4–24 (PVPKLWVVISSAFVFCLLVLF) form a helical; Signal-anchor for type II membrane protein membrane-spanning segment. Topologically, residues 25-509 (QINKSDLIEA…KLEIIHEKTA (485 aa)) are lumenal. Asparagine 27, asparagine 59, asparagine 65, asparagine 169, asparagine 170, asparagine 195, asparagine 257, and asparagine 416 each carry an N-linked (GlcNAc...) asparagine glycan.

It belongs to the glycosyltransferase 47 family. As to expression, expressed in pollen grains.

The protein localises to the golgi apparatus membrane. In terms of biological role, functions in xyloglucan synthesis by adding side chains to the xylosylated glucan backbone. Involved in the galactosylation of hemicellulose xyloglucan. The chain is Probable xyloglucan galactosyltransferase GT12 from Arabidopsis thaliana (Mouse-ear cress).